A 224-amino-acid polypeptide reads, in one-letter code: Steroid receptor RNA activator 1 (224 aa).

Disordered regions lie at residues 1-90 and 201-224; these read MAEL…EPTS and AANE…QQAS. Phosphoserine is present on residues Ser-48, Ser-57, and Ser-75. Over residues 58 to 76 the composition is skewed to pro residues; it reads PGPPPMGPPPPSSKAPRSP. Residues 201–215 are compositionally biased toward basic and acidic residues; the sequence is AANEEKSAATAEKNH.

This sequence belongs to the SRA1 family. In terms of assembly, SRA1 RNA exists in a ribonucleoprotein complex containing NCOA1. The RNA also forms a complex with PUS1 and RARG in the nucleus. Interacts with AR. In terms of tissue distribution, highly expressed in liver and skeletal muscle and to a lesser extent in brain. Also expressed in both normal and tumorigenic breast epithelial cell lines. Significantly up-regulated in human tumors of the breast, ovary, and uterus.

It localises to the nucleus. It is found in the cytoplasm. Functionally, functional RNA which acts as a transcriptional coactivator that selectively enhances steroid receptor-mediated transactivation ligand-independently through a mechanism involving the modulating N-terminal domain (AF-1) of steroid receptors. Also mediates transcriptional coactivation of steroid receptors ligand-dependently through the steroid-binding domain (AF-2). Enhances cellular proliferation and differentiation and promotes apoptosis in vivo. May play a role in tumorigenesis. The chain is Steroid receptor RNA activator 1 from Homo sapiens (Human).